Consider the following 220-residue polypeptide: Large ribosomal subunit protein uL6c (220 aa).

A chloroplast-targeting transit peptide spans 1 to 38; sequence MSLPLPSHMKSVFLGMKVEISTSVPVTRIGFWRKSVDC.

In terms of assembly, component of the chloroplast large ribosomal subunit (LSU). Mature 70S chloroplast ribosomes of higher plants consist of a small (30S) and a large (50S) subunit. The 30S small subunit contains 1 molecule of ribosomal RNA (16S rRNA) and 24 different proteins. The 50S large subunit contains 3 rRNA molecules (23S, 5S and 4.5S rRNA) and 33 different proteins.

It is found in the plastid. Its subcellular location is the chloroplast. Its function is as follows. Component of the chloroplast ribosome (chloro-ribosome), a dedicated translation machinery responsible for the synthesis of chloroplast genome-encoded proteins, including proteins of the transcription and translation machinery and components of the photosynthetic apparatus. This is Large ribosomal subunit protein uL6c (RPL6) from Spinacia oleracea (Spinach).